Reading from the N-terminus, the 152-residue chain is Interleukin-1 family member 10 (152 aa).

This sequence belongs to the IL-1 family. Interacts with cargo receptor TMED10; the interaction mediates the translocation from the cytoplasm into the ERGIC (endoplasmic reticulum-Golgi intermediate compartment) and thereby secretion.

Its subcellular location is the cytoplasm. The protein resides in the endoplasmic reticulum-Golgi intermediate compartment. It localises to the secreted. Functionally, cytokine with immunomodulatory activity. Alone, does not induce cytokine production, but reduces IL22 and IL17A production by T-cells in response to heat-killed Candida albicans. Reduces IL36G-induced production of IL8 by peripheral blood mononuclear cells. Increases IL6 production by dendritic cells stimulated by bacterial lipopolysaccharides (LPS). Ligand for IL-36R/IL1RL2. The protein is Interleukin-1 family member 10 (Il1f10) of Mus musculus (Mouse).